Here is a 248-residue protein sequence, read N- to C-terminus: Mannose-binding protein C (248 aa).

An N-terminal signal peptide occupies residues 1–20 (MSLFPSLTLLLLSVVATSYS). Positions 42-99 (GINGFPGKDGRDGTKGEKGEPGQGLRGLQGPPGKLGPPGNPGSSGSPGPKGQKGDPGE) constitute a Collagen-like domain. A disordered region spans residues 43–111 (INGFPGKDGR…DCESSLAASE (69 aa)). 4-hydroxyproline is present on proline 47. Positions 49–61 (KDGRDGTKGEKGE) are enriched in basic and acidic residues. A 4-hydroxyproline mark is found at proline 73, proline 79, proline 82, and proline 88. Over residues 82–91 (PGSSGSPGPK) the composition is skewed to low complexity. Residues 112 to 130 (RKALQTEMARIKKWLTFSL) adopt a coiled-coil conformation. The C-type lectin domain occupies 134 to 245 (VGNKFFLTNG…CSSSHLALCE (112 aa)). Disulfide bonds link cysteine 155–cysteine 244 and cysteine 222–cysteine 236.

As to quaternary structure, oligomeric complex of 3 or more homotrimers. Interacts with MASP1 and MASP2. Interacts with MEP1A and MEP1B and may inhibit their catalytic activity. In terms of processing, hydroxylation on proline residues within the sequence motif, GXPG, is most likely to be 4-hydroxy as this fits the requirement for 4-hydroxylation in vertebrates.

It is found in the secreted. Its function is as follows. Calcium-dependent lectin involved in innate immune defense. Binds mannose, fucose and N-acetylglucosamine on different microorganisms and activates the lectin complement pathway. Binds to late apoptotic cells, as well as to apoptotic blebs and to necrotic cells, but not to early apoptotic cells, facilitating their uptake by macrophages. The chain is Mannose-binding protein C (MBL2) from Macaca fascicularis (Crab-eating macaque).